A 317-amino-acid polypeptide reads, in one-letter code: Cytochrome c biogenesis protein CcsA (317 aa).

7 consecutive transmembrane segments (helical) span residues 13-35 (ISFS…HEIV), 44-64 (GMIA…IYSG), 71-91 (LYES…VPYF), 143-163 (MLLS…LLVI), 171-191 (MIGF…IKYL), 225-245 (VIGL…VWAN), and 286-306 (AIVA…VNLL).

It belongs to the CcmF/CycK/Ccl1/NrfE/CcsA family. In terms of assembly, may interact with Ccs1.

It is found in the plastid. The protein localises to the chloroplast thylakoid membrane. Its function is as follows. Required during biogenesis of c-type cytochromes (cytochrome c6 and cytochrome f) at the step of heme attachment. This Illicium oligandrum (Star anise) protein is Cytochrome c biogenesis protein CcsA.